The sequence spans 424 residues: CinA-like protein (424 aa).

The protein belongs to the CinA family.

This Shewanella baltica (strain OS195) protein is CinA-like protein.